Here is a 195-residue protein sequence, read N- to C-terminus: uncharacterized protein (195 aa).

The disordered stretch occupies residues 86 to 158 (LPSEGGWTSG…PAPVSGEPPE (73 aa)).

This is an uncharacterized protein from Homo sapiens (Human).